Consider the following 213-residue polypeptide: Superoxide dismutase [Fe] (213 aa).

Residues histidine 26, histidine 73, aspartate 156, and histidine 160 each contribute to the Fe cation site.

The protein belongs to the iron/manganese superoxide dismutase family. In terms of assembly, homodimer. It depends on Fe cation as a cofactor.

It carries out the reaction 2 superoxide + 2 H(+) = H2O2 + O2. Functionally, destroys superoxide anion radicals which are normally produced within the cells and which are toxic to biological systems. This is Superoxide dismutase [Fe] (sodB) from Helicobacter pylori (strain ATCC 700392 / 26695) (Campylobacter pylori).